A 266-amino-acid polypeptide reads, in one-letter code: GTP cyclohydrolase FolE2 1 (266 aa).

This sequence belongs to the GTP cyclohydrolase IV family.

It carries out the reaction GTP + H2O = 7,8-dihydroneopterin 3'-triphosphate + formate + H(+). It functions in the pathway cofactor biosynthesis; 7,8-dihydroneopterin triphosphate biosynthesis; 7,8-dihydroneopterin triphosphate from GTP: step 1/1. Converts GTP to 7,8-dihydroneopterin triphosphate. This is GTP cyclohydrolase FolE2 1 from Dechloromonas aromatica (strain RCB).